A 434-amino-acid polypeptide reads, in one-letter code: Histidinol dehydrogenase (434 aa).

The NAD(+) site is built by tyrosine 130, glutamine 188, and asparagine 211. Substrate contacts are provided by serine 237, glutamine 259, and histidine 262. Zn(2+) contacts are provided by glutamine 259 and histidine 262. Active-site proton acceptor residues include glutamate 326 and histidine 327. Residues histidine 327, aspartate 360, glutamate 414, and histidine 419 each coordinate substrate. Aspartate 360 is a Zn(2+) binding site. Histidine 419 provides a ligand contact to Zn(2+).

This sequence belongs to the histidinol dehydrogenase family. In terms of assembly, homodimer. Zn(2+) serves as cofactor.

It catalyses the reaction L-histidinol + 2 NAD(+) + H2O = L-histidine + 2 NADH + 3 H(+). It functions in the pathway amino-acid biosynthesis; L-histidine biosynthesis; L-histidine from 5-phospho-alpha-D-ribose 1-diphosphate: step 9/9. Functionally, catalyzes the sequential NAD-dependent oxidations of L-histidinol to L-histidinaldehyde and then to L-histidine. The protein is Histidinol dehydrogenase of Salmonella typhi.